Here is a 455-residue protein sequence, read N- to C-terminus: Exodeoxyribonuclease 7 large subunit (455 aa).

It belongs to the XseA family. Heterooligomer composed of large and small subunits.

It is found in the cytoplasm. The catalysed reaction is Exonucleolytic cleavage in either 5'- to 3'- or 3'- to 5'-direction to yield nucleoside 5'-phosphates.. Functionally, bidirectionally degrades single-stranded DNA into large acid-insoluble oligonucleotides, which are then degraded further into small acid-soluble oligonucleotides. This Lactobacillus acidophilus (strain ATCC 700396 / NCK56 / N2 / NCFM) protein is Exodeoxyribonuclease 7 large subunit.